The primary structure comprises 277 residues: SF-assemblin (277 aa).

The interval 1–20 (MATSGMVSPTSGRPFSPMRS) is disordered. Positions 1-27 (MATSGMVSPTSGRPFSPMRSSVLTTTG) are nonhelical region. Residues 28–277 (SAIKLEHVSE…KMVNMQHNSA (250 aa)) are rod. The stretch at 70 to 90 (RLEKSMEAEVKRRAESDKQLQ) forms a coiled coil.

This sequence belongs to the SF-assemblin family. In terms of processing, the N-terminus is blocked.

It localises to the cytoplasm. Its subcellular location is the cytoskeleton. Its function is as follows. Major component of the striated microtubule-associated fibers (SMAFs; system-I-fibers). This is SF-assemblin from Dunaliella bioculata (Green alga).